The following is a 233-amino-acid chain: 2,3-bisphosphoglycerate-dependent phosphoglycerate mutase (233 aa).

Substrate-binding positions include 8–15, 21–22, Arg-60, 87–90, Lys-98, 114–115, and 183–184; these read RHGESEWN, TG, ERHY, RR, and GN. His-9 functions as the Tele-phosphohistidine intermediate in the catalytic mechanism. Glu-87 functions as the Proton donor/acceptor in the catalytic mechanism.

The protein belongs to the phosphoglycerate mutase family. BPG-dependent PGAM subfamily.

It carries out the reaction (2R)-2-phosphoglycerate = (2R)-3-phosphoglycerate. Its pathway is carbohydrate degradation; glycolysis; pyruvate from D-glyceraldehyde 3-phosphate: step 3/5. Its function is as follows. Catalyzes the interconversion of 2-phosphoglycerate and 3-phosphoglycerate. The protein is 2,3-bisphosphoglycerate-dependent phosphoglycerate mutase of Lactococcus lactis subsp. cremoris (strain MG1363).